The sequence spans 167 residues: Bacterial non-heme ferritin-like protein (167 aa).

The region spanning 1-145 (MATAGMLLKL…TILDEVRSAK (145 aa)) is the Ferritin-like diiron domain.

Belongs to the ferritin family. Prokaryotic subfamily.

Its subcellular location is the cytoplasm. The protein is Bacterial non-heme ferritin-like protein (ftnB) of Escherichia coli O157:H7.